Reading from the N-terminus, the 74-residue chain is ATP synthase subunit c (74 aa).

2 helical membrane-spanning segments follow: residues 5 to 25 (LAYI…LGVG) and 49 to 69 (LFIG…VALL).

The protein belongs to the ATPase C chain family. F-type ATPases have 2 components, F(1) - the catalytic core - and F(0) - the membrane proton channel. F(1) has five subunits: alpha(3), beta(3), gamma(1), delta(1), epsilon(1). F(0) has three main subunits: a(1), b(2) and c(10-14). The alpha and beta chains form an alternating ring which encloses part of the gamma chain. F(1) is attached to F(0) by a central stalk formed by the gamma and epsilon chains, while a peripheral stalk is formed by the delta and b chains.

The protein localises to the cell inner membrane. Functionally, f(1)F(0) ATP synthase produces ATP from ADP in the presence of a proton or sodium gradient. F-type ATPases consist of two structural domains, F(1) containing the extramembraneous catalytic core and F(0) containing the membrane proton channel, linked together by a central stalk and a peripheral stalk. During catalysis, ATP synthesis in the catalytic domain of F(1) is coupled via a rotary mechanism of the central stalk subunits to proton translocation. Its function is as follows. Key component of the F(0) channel; it plays a direct role in translocation across the membrane. A homomeric c-ring of between 10-14 subunits forms the central stalk rotor element with the F(1) delta and epsilon subunits. This chain is ATP synthase subunit c, found in Ruegeria sp. (strain TM1040) (Silicibacter sp.).